A 213-amino-acid chain; its full sequence is Uracil phosphoribosyltransferase (213 aa).

5-phospho-alpha-D-ribose 1-diphosphate contacts are provided by residues R78, R103, and 130-138; that span reads DPMLATGGS. Uracil contacts are provided by residues I193 and 198–200; that span reads GDA. A 5-phospho-alpha-D-ribose 1-diphosphate-binding site is contributed by D199.

This sequence belongs to the UPRTase family. Mg(2+) is required as a cofactor.

The enzyme catalyses UMP + diphosphate = 5-phospho-alpha-D-ribose 1-diphosphate + uracil. Its pathway is pyrimidine metabolism; UMP biosynthesis via salvage pathway; UMP from uracil: step 1/1. Allosterically activated by GTP. In terms of biological role, catalyzes the conversion of uracil and 5-phospho-alpha-D-ribose 1-diphosphate (PRPP) to UMP and diphosphate. The polypeptide is Uracil phosphoribosyltransferase (Bordetella bronchiseptica (strain ATCC BAA-588 / NCTC 13252 / RB50) (Alcaligenes bronchisepticus)).